The chain runs to 601 residues: Putative ankyrin repeat protein R841 (601 aa).

ANK repeat units lie at residues 17 to 50 (NNIT…DVNA), 54 to 86 (HGKS…DVNH), 91 to 123 (QRSV…NINY), 165 to 197 (RENI…NIDH), 201 to 234 (YGQT…NINS), 238 to 269 (KGWS…EINS), 274 to 310 (NETM…SIDN), 314 to 349 (KGYT…NINS), 361 to 390 (VCCD…DVNS), 397 to 427 (TILM…NPNI), 432 to 463 (YHKF…DPNI), and 467 to 500 (IGNN…SYNC).

This Acanthamoeba polyphaga mimivirus (APMV) protein is Putative ankyrin repeat protein R841.